A 165-amino-acid polypeptide reads, in one-letter code: Protoporphyrinogen IX oxidase (165 aa).

4 consecutive transmembrane segments (helical) span residues 26–46 (LHVISVLAWMAGLFYLPRLFV), 77–97 (AMIATWIFGLLLVFTPGIVDW), 99–119 (MLWPWTKAACVLAMTGFHMWL), and 145–165 (PTLLMLVIVFSAVAKWNYWGF). Position 27 (His27) interacts with heme. Residue Lys105 coordinates heme.

Belongs to the HemJ family. As to quaternary structure, homodimer. The cofactor is heme b.

The protein localises to the cell membrane. The catalysed reaction is protoporphyrinogen IX + 3 A = protoporphyrin IX + 3 AH2. The protein operates within porphyrin-containing compound metabolism; protoporphyrin-IX biosynthesis; protoporphyrin-IX from protoporphyrinogen-IX: step 1/1. Functionally, catalyzes the oxidation of protoporphyrinogen IX to protoporphyrin IX. Is involved in the biosynthesis of tetrapyrrole molecules like heme and chlorophyll. Does not use oxygen or artificial electron acceptors such as menadione or benzoquinone. The sequence is that of Protoporphyrinogen IX oxidase from Cereibacter sphaeroides (strain ATCC 17023 / DSM 158 / JCM 6121 / CCUG 31486 / LMG 2827 / NBRC 12203 / NCIMB 8253 / ATH 2.4.1.) (Rhodobacter sphaeroides).